We begin with the raw amino-acid sequence, 425 residues long: Tyrosine--tRNA ligase (425 aa).

Y37 provides a ligand contact to L-tyrosine. Residues 42–51 (PTADSLHLGH) carry the 'HIGH' region motif. L-tyrosine contacts are provided by Y175 and Q179. The short motif at 235–239 (KFGKT) is the 'KMSKS' region element. Position 238 (K238) interacts with ATP. The S4 RNA-binding domain maps to 357–415 (QDLQQALVNAELAPSRGQARKLIEAKSVSINGSLQTDAEYTFGEDDRLFGQYTLLRRGK).

The protein belongs to the class-I aminoacyl-tRNA synthetase family. TyrS type 1 subfamily. As to quaternary structure, homodimer.

The protein resides in the cytoplasm. It carries out the reaction tRNA(Tyr) + L-tyrosine + ATP = L-tyrosyl-tRNA(Tyr) + AMP + diphosphate + H(+). Its function is as follows. Catalyzes the attachment of tyrosine to tRNA(Tyr) in a two-step reaction: tyrosine is first activated by ATP to form Tyr-AMP and then transferred to the acceptor end of tRNA(Tyr). The sequence is that of Tyrosine--tRNA ligase from Erwinia tasmaniensis (strain DSM 17950 / CFBP 7177 / CIP 109463 / NCPPB 4357 / Et1/99).